Here is a 249-residue protein sequence, read N- to C-terminus: Probable transcriptional regulatory protein Sare_1779 (249 aa).

This sequence belongs to the TACO1 family.

It localises to the cytoplasm. This is Probable transcriptional regulatory protein Sare_1779 from Salinispora arenicola (strain CNS-205).